The sequence spans 305 residues: UDP-3-O-acyl-N-acetylglucosamine deacetylase (305 aa).

Residues His78, His237, and Asp241 each contribute to the Zn(2+) site. Catalysis depends on His264, which acts as the Proton donor.

Belongs to the LpxC family. Requires Zn(2+) as cofactor.

It catalyses the reaction a UDP-3-O-[(3R)-3-hydroxyacyl]-N-acetyl-alpha-D-glucosamine + H2O = a UDP-3-O-[(3R)-3-hydroxyacyl]-alpha-D-glucosamine + acetate. It functions in the pathway glycolipid biosynthesis; lipid IV(A) biosynthesis; lipid IV(A) from (3R)-3-hydroxytetradecanoyl-[acyl-carrier-protein] and UDP-N-acetyl-alpha-D-glucosamine: step 2/6. Its function is as follows. Catalyzes the hydrolysis of UDP-3-O-myristoyl-N-acetylglucosamine to form UDP-3-O-myristoylglucosamine and acetate, the committed step in lipid A biosynthesis. The chain is UDP-3-O-acyl-N-acetylglucosamine deacetylase from Burkholderia cenocepacia (strain ATCC BAA-245 / DSM 16553 / LMG 16656 / NCTC 13227 / J2315 / CF5610) (Burkholderia cepacia (strain J2315)).